The following is a 633-amino-acid chain: Copine-7 (633 aa).

2 consecutive C2 domains span residues 2–133 (SAGS…MRVS) and 212–339 (NAGK…AQWD). Ca(2+) contacts are provided by Asp245, Asp251, Asp307, Asp309, and Asp315. The region spanning 382–581 (HFTVAIDFTA…PALRDIVQFV (200 aa)) is the VWFA domain.

It belongs to the copine family. Ca(2+) serves as cofactor. In terms of tissue distribution, expressed in the brain, testis, thymus and small intestine.

The protein resides in the cytoplasm. The protein localises to the nucleus. Its subcellular location is the cell membrane. In terms of biological role, calcium-dependent phospholipid-binding protein that may play a role in calcium-mediated intracellular processes. This Homo sapiens (Human) protein is Copine-7.